Consider the following 358-residue polypeptide: Plancitoxin-1 (358 aa).

The first 26 residues, 1-26 (MPSSVIMFTFLALTVLTAVMVGTSEA), serve as a signal peptide directing secretion. The N-linked (GlcNAc...) asparagine glycan is linked to Asn-274. His-303 is a catalytic residue.

This sequence belongs to the DNase II family. In terms of assembly, plancitoxin is a heterodimer of alpha and beta subunits; disulfide-linked by a single disulfide bond. Venom gland.

Its subcellular location is the secreted. It carries out the reaction Endonucleolytic cleavage to nucleoside 3'-phosphates and 3'-phosphooligonucleotide end-products.. Its function is as follows. Hydrolyzes DNA with an optimum pH of 7.2. Is potently hepatotoxic. It induces caspase-independent apoptosis (on rat liver cells) through the following procedure: binding to a specific receptor in the cytoplasmic membrane, entering the cell, entering the nucleus and degrading DNA. The chain is Plancitoxin-1 from Acanthaster planci (Crown-of-thorns starfish).